A 263-amino-acid chain; its full sequence is Eukaryotic translation initiation factor 3 subunit J-B (263 aa).

A compositionally biased stretch (low complexity) spans 1–13 (MAAAAAAAAAAAA). A disordered region spans residues 1–115 (MAAAAAAAAA…EPEESKVLTP (115 aa)). Ala-2 is modified (N-acetylalanine). The segment at 6 to 74 (AAAAAAAAGD…KEEAEVKPEV (69 aa)) is sufficient for interaction with EIF3B. Phosphoserine occurs at positions 16, 18, and 25. Residues 45–66 (EGEDEDEDVKDNWDDDDDENKE) are compositionally biased toward acidic residues. Over residues 67-111 (EAEVKPEVKISEKKKIAEKIKEKERQQKKRQEEIKKRLEEPEESK) the composition is skewed to basic and acidic residues. Positions 75 to 140 (KISEKKKIAE…ESDLELAKET (66 aa)) form a coiled coil. A Glycyl lysine isopeptide (Lys-Gly) (interchain with G-Cter in SUMO2) cross-link involves residue Lys-111. Position 114 is a phosphothreonine (Thr-114). Ser-132 is subject to Phosphoserine. Residues 248-263 (YGGYEGGYVQDYEDFM) form a promotes stable association with the 40S ribosome region. Residue Tyr-259 is modified to Phosphotyrosine.

Belongs to the eIF-3 subunit J family. Component of the eukaryotic translation initiation factor 3 (eIF-3) complex, which is composed of 13 subunits: EIF3A, EIF3B, EIF3C, EIF3D, EIF3E, EIF3F, EIF3G, EIF3H, EIF3I, EIF3J, EIF3K, EIF3L and EIF3M. The eIF-3 complex appears to include 3 stable modules: module A is composed of EIF3A, EIF3B, EIF3G and EIF3I; module B is composed of EIF3F, EIF3H, and EIF3M; and module C is composed of EIF3C, EIF3D, EIF3E, EIF3K and EIF3L. EIF3C of module C binds EIF3B of module A and EIF3H of module B, thereby linking the three modules. EIF3J is a labile subunit that binds to the eIF-3 complex via EIF3B. The eIF-3 complex interacts with RPS6KB1 under conditions of nutrient depletion. Mitogenic stimulation leads to binding and activation of a complex composed of MTOR and RPTOR, leading to phosphorylation and release of RPS6KB1 and binding of EIF4B to eIF-3. In terms of processing, phosphorylated. Phosphorylation is enhanced upon serum stimulation.

Its subcellular location is the cytoplasm. In terms of biological role, component of the eukaryotic translation initiation factor 3 (eIF-3) complex, which is required for several steps in the initiation of protein synthesis. The eIF-3 complex associates with the 40S ribosome and facilitates the recruitment of eIF-1, eIF-1A, eIF-2:GTP:methionyl-tRNAi and eIF-5 to form the 43S pre-initiation complex (43S PIC). The eIF-3 complex stimulates mRNA recruitment to the 43S PIC and scanning of the mRNA for AUG recognition. The eIF-3 complex is also required for disassembly and recycling of post-termination ribosomal complexes and subsequently prevents premature joining of the 40S and 60S ribosomal subunits prior to initiation. The eIF-3 complex specifically targets and initiates translation of a subset of mRNAs involved in cell proliferation, including cell cycling, differentiation and apoptosis, and uses different modes of RNA stem-loop binding to exert either translational activation or repression. This subunit binds directly within the mRNA entry channel of the 40S ribosome to the aminoacyl (A) site. It may regulate the interaction between the 43S PIC and mRNA. This is Eukaryotic translation initiation factor 3 subunit J-B (Eif3j2) from Mus musculus (Mouse).